The primary structure comprises 310 residues: tRNA dimethylallyltransferase (310 aa).

Position 13–20 (13–20) interacts with ATP; the sequence is GPTASGKT. 15-20 is a binding site for substrate; that stretch reads TASGKT. Interaction with substrate tRNA stretches follow at residues 38 to 41, 162 to 166, 243 to 248, and 276 to 283; these read DSAL, QRLSR, RCVGYR, and KRQITWLR.

The protein belongs to the IPP transferase family. In terms of assembly, monomer. Requires Mg(2+) as cofactor.

The enzyme catalyses adenosine(37) in tRNA + dimethylallyl diphosphate = N(6)-dimethylallyladenosine(37) in tRNA + diphosphate. Functionally, catalyzes the transfer of a dimethylallyl group onto the adenine at position 37 in tRNAs that read codons beginning with uridine, leading to the formation of N6-(dimethylallyl)adenosine (i(6)A). This Vibrio parahaemolyticus serotype O3:K6 (strain RIMD 2210633) protein is tRNA dimethylallyltransferase.